Consider the following 323-residue polypeptide: Zinc finger C2HC domain-containing protein 1A (323 aa).

The C2HC/C3H-type 1 zinc finger occupies 7–36 (ELRPCKICGRTFFPATLKKHVPICQKTSVK). Zn(2+)-binding residues include cysteine 11, cysteine 14, histidine 26, and cysteine 30. Positions 35 to 75 (VKKRKTFESSRQRAEGTDINTVKPVKPRPEPPKKQSNWKRK) are disordered. Basic and acidic residues predominate over residues 40 to 50 (TFESSRQRAEG). The segment at 110 to 139 (DYVQCPYCQRRFNQNAADRHINFCKEQSAR) adopts a C2HC/C3H-type 2 zinc-finger fold. Positions 114, 117, 129, and 133 each coordinate Zn(2+). A disordered region spans residues 138-273 (ARMGQKIKGG…EAAMGYDSSD (136 aa)). Polar residues predominate over residues 208 to 226 (KYQTQSPAHKNSTMVTSPQ).

The protein belongs to the ZC2HC1 family. The cofactor is Zn(2+).

The sequence is that of Zinc finger C2HC domain-containing protein 1A (zc2hc1a) from Xenopus laevis (African clawed frog).